The sequence spans 765 residues: Transcription factor SKN7 (765 aa).

A disordered region spans residues 1-42 (MPPTNGEGGSQQPQQQQQQQQQQQQQQQQQQQQQQGGSGSSD). The span at 11-35 (QQPQQQQQQQQQQQQQQQQQQQQQQ) shows a compositional bias: low complexity. A DNA-binding domain region spans residues 40–145 (SSDFVRKLYK…NLDNIRRKAP (106 aa)). The stretch at 157 to 198 (FNASQQQIAALSESLQATQQQLQALQQQCYELEKTNRLLVSE) forms a coiled coil. A hydrophobic repeat HR-A/B region spans residues 160–220 (SQQQIAALSE…QASNEIINHL (61 aa)). The disordered stretch occupies residues 371–391 (SSSQITPSQITPPPKDQMSSM). Residues 398 to 514 (RVLLVEDDKT…NMSRLLRRHL (117 aa)) enclose the Response regulatory domain. The residue at position 449 (Asp449) is a 4-aspartylphosphate. The segment at 542 to 765 (TAGPATTGVG…PGVGVAGFVQ (224 aa)) is transactivation domain. Over residues 550–564 (VGVGVAGAPSGGAHG) the composition is skewed to gly residues. 2 disordered regions span residues 550–647 (VGVG…PAGL) and 686–765 (PGAM…GFVQ). Residues 569 to 584 (AQHQQGYAMAPPTTMQ) show a composition bias toward low complexity. The span at 626 to 636 (QPPPPPTPTQP) shows a compositional bias: pro residues. Low complexity-rich tracts occupy residues 637–647 (SPTSAAPPAGL) and 699–715 (GVGH…AGAR). A compositionally biased stretch (gly residues) spans 755 to 765 (HPGVGVAGFVQ).

This sequence belongs to the SKN7 family. Homotrimer.

Its subcellular location is the nucleus. Functionally, transcription factor that is part of a SLN1-YPD1-SKN7 two-component regulatory system, which controls gene expression in response to changes in the osmolarity of the extracellular environment. Under low osmotic conditions, phosphorylated and activated by the phosphorelay intermediate protein YPD1. Also activated in response to oxidative stress, independent on the two-component regulatory system. Regulates heat shock genes in response to oxidative stress and genes involved in cell wall integrity in response to osmotic changes. This chain is Transcription factor SKN7, found in Chaetomium thermophilum (strain DSM 1495 / CBS 144.50 / IMI 039719) (Thermochaetoides thermophila).